Reading from the N-terminus, the 142-residue chain is Neuritin (142 aa).

The N-terminal stretch at 1-27 (MGLTLSGRYISLFLAVQIAYLLQAVRA) is a signal peptide. A112 is lipidated: GPI-anchor amidated alanine. A propeptide spans 113 to 142 (GGNGAIRSSVPFGVTLLITALSALVTWMQF) (removed in mature form).

Belongs to the neuritin family.

The protein resides in the cell membrane. The protein localises to the synapse. In terms of biological role, modulates postsynaptic dendritic arbor elaboration and synaptic maturation. In Danio rerio (Zebrafish), this protein is Neuritin (nrn1).